We begin with the raw amino-acid sequence, 165 residues long: NAD(P)H-quinone oxidoreductase subunit J, chloroplastic (165 aa).

The protein belongs to the complex I 30 kDa subunit family. NDH is composed of at least 16 different subunits, 5 of which are encoded in the nucleus.

The protein localises to the plastid. It localises to the chloroplast thylakoid membrane. The catalysed reaction is a plastoquinone + NADH + (n+1) H(+)(in) = a plastoquinol + NAD(+) + n H(+)(out). It carries out the reaction a plastoquinone + NADPH + (n+1) H(+)(in) = a plastoquinol + NADP(+) + n H(+)(out). In terms of biological role, NDH shuttles electrons from NAD(P)H:plastoquinone, via FMN and iron-sulfur (Fe-S) centers, to quinones in the photosynthetic chain and possibly in a chloroplast respiratory chain. The immediate electron acceptor for the enzyme in this species is believed to be plastoquinone. Couples the redox reaction to proton translocation, and thus conserves the redox energy in a proton gradient. This chain is NAD(P)H-quinone oxidoreductase subunit J, chloroplastic, found in Ipomoea purpurea (Common morning glory).